The sequence spans 116 residues: Ribosome-binding factor A (116 aa).

The protein belongs to the RbfA family. In terms of assembly, monomer. Binds 30S ribosomal subunits, but not 50S ribosomal subunits or 70S ribosomes.

It localises to the cytoplasm. Its function is as follows. One of several proteins that assist in the late maturation steps of the functional core of the 30S ribosomal subunit. Associates with free 30S ribosomal subunits (but not with 30S subunits that are part of 70S ribosomes or polysomes). Required for efficient processing of 16S rRNA. May interact with the 5'-terminal helix region of 16S rRNA. This Halalkalibacterium halodurans (strain ATCC BAA-125 / DSM 18197 / FERM 7344 / JCM 9153 / C-125) (Bacillus halodurans) protein is Ribosome-binding factor A.